Here is a 118-residue protein sequence, read N- to C-terminus: Small ribosomal subunit protein uS13 (118 aa).

The disordered stretch occupies residues 93 to 118 (RNLPVRGQNTKNNARTRKGPTRPLKR). Over residues 106–118 (ARTRKGPTRPLKR) the composition is skewed to basic residues.

It belongs to the universal ribosomal protein uS13 family. Part of the 30S ribosomal subunit. Forms a loose heterodimer with protein S19. Forms two bridges to the 50S subunit in the 70S ribosome.

In terms of biological role, located at the top of the head of the 30S subunit, it contacts several helices of the 16S rRNA. In the 70S ribosome it contacts the 23S rRNA (bridge B1a) and protein L5 of the 50S subunit (bridge B1b), connecting the 2 subunits; these bridges are implicated in subunit movement. Contacts the tRNAs in the A and P-sites. This Psychrobacter cryohalolentis (strain ATCC BAA-1226 / DSM 17306 / VKM B-2378 / K5) protein is Small ribosomal subunit protein uS13.